The chain runs to 728 residues: Histone demethylase JHD2 (728 aa).

One can recognise a JmjN domain in the interval Ile4–Pro47. A PHD-type zinc finger spans residues Asp235–Gly285. The JmjC domain maps to Lys381–Lys549. Residues His427, Asp430, and His517 each coordinate Fe cation.

The protein belongs to the JARID1 histone demethylase family. Requires Fe(2+) as cofactor.

Its subcellular location is the nucleus. It catalyses the reaction N(6),N(6),N(6)-trimethyl-L-lysyl(4)-[histone H3] + 3 2-oxoglutarate + 3 O2 = L-lysyl(4)-[histone H3] + 3 formaldehyde + 3 succinate + 3 CO2. In terms of biological role, histone demethylase that demethylates 'Lys-4' of histone H3, thereby playing a central role in histone code. Demethylates trimethylated H3 'Lys-4'. This is Histone demethylase JHD2 (JHD2) from Saccharomyces cerevisiae (strain ATCC 204508 / S288c) (Baker's yeast).